Reading from the N-terminus, the 457-residue chain is Elongation factor 1-alpha (457 aa).

At glycine 2 the chain carries N,N,N-trimethylglycine. Residue lysine 3 is modified to N6,N6-dimethyllysine; alternate. Lysine 3 is modified (N6-methyllysine; alternate). Residues 5–240 (KTHVNVVVIG…DAIEPPVRPS (236 aa)) enclose the tr-type G domain. The G1 stretch occupies residues 14–21 (GHVDSGKS). A GTP-binding site is contributed by 14–21 (GHVDSGKS). Lysine 30 carries the post-translational modification N6-methyllysine. Residues 70 to 74 (GITID) are G2. An N6,N6,N6-trimethyllysine modification is found at lysine 79. The segment at 91–94 (DAPG) is G3. GTP contacts are provided by residues 91–95 (DAPGH) and 153–156 (NKMD). Residues 153–156 (NKMD) are G4. The interval 192–194 (SGW) is G5. Lysine 316 carries the N6,N6-dimethyllysine; alternate modification. Residue lysine 316 is modified to N6-methyllysine; alternate. Residue lysine 389 is modified to N6-methyllysine.

This sequence belongs to the TRAFAC class translation factor GTPase superfamily. Classic translation factor GTPase family. EF-Tu/EF-1A subfamily.

It localises to the cytoplasm. This protein promotes the GTP-dependent binding of aminoacyl-tRNA to the A-site of ribosomes during protein biosynthesis. In Mucor circinelloides f. lusitanicus (Mucor racemosus var. lusitanicus), this protein is Elongation factor 1-alpha (TEF-3).